The primary structure comprises 100 residues: Small ribosomal subunit protein uS14c (100 aa).

Belongs to the universal ribosomal protein uS14 family. In terms of assembly, part of the 30S ribosomal subunit.

The protein localises to the plastid. It is found in the chloroplast. Its function is as follows. Binds 16S rRNA, required for the assembly of 30S particles. The protein is Small ribosomal subunit protein uS14c of Mesostigma viride (Green alga).